Consider the following 424-residue polypeptide: Phosphoribosylamine--glycine ligase (424 aa).

The 202-residue stretch at 111–312 folds into the ATP-grasp domain; the sequence is KAFVKECGIK…LLDLCLATAK (202 aa). Position 137 to 189 (137 to 189) interacts with ATP; that stretch reads IQNASFPLVIKALNKNTSIVYQEEEAIKILEDAFKQSNEPVIIEPFLEGFELS.

Belongs to the GARS family.

It catalyses the reaction 5-phospho-beta-D-ribosylamine + glycine + ATP = N(1)-(5-phospho-beta-D-ribosyl)glycinamide + ADP + phosphate + H(+). The protein operates within purine metabolism; IMP biosynthesis via de novo pathway; N(1)-(5-phospho-D-ribosyl)glycinamide from 5-phospho-alpha-D-ribose 1-diphosphate: step 2/2. In Helicobacter pylori (strain ATCC 700392 / 26695) (Campylobacter pylori), this protein is Phosphoribosylamine--glycine ligase (purD).